The following is a 206-amino-acid chain: Xanthine phosphoribosyltransferase (206 aa).

Leu-28 and Asn-35 together coordinate xanthine. 5-phospho-alpha-D-ribose 1-diphosphate is bound at residue 136-140 (ANGQA). Residue Lys-164 coordinates xanthine.

This sequence belongs to the purine/pyrimidine phosphoribosyltransferase family. Xpt subfamily. As to quaternary structure, homodimer.

It localises to the cytoplasm. It catalyses the reaction XMP + diphosphate = xanthine + 5-phospho-alpha-D-ribose 1-diphosphate. Its pathway is purine metabolism; XMP biosynthesis via salvage pathway; XMP from xanthine: step 1/1. Its function is as follows. Converts the preformed base xanthine, a product of nucleic acid breakdown, to xanthosine 5'-monophosphate (XMP), so it can be reused for RNA or DNA synthesis. The chain is Xanthine phosphoribosyltransferase from Oenococcus oeni (strain ATCC BAA-331 / PSU-1).